Consider the following 715-residue polypeptide: ATP-dependent zinc metalloprotease YME1L1 (715 aa).

The Mitochondrial matrix segment spans residues 1–237 (MFSLSSTVQP…TNDSLRRTRL (237 aa)). Residues 34–54 (NTPVSQKQHRDTVPEHEAPSS) form a disordered region. Over residues 41–52 (QHRDTVPEHEAP) the composition is skewed to basic and acidic residues. The helical transmembrane segment at 238-258 (ILFVLLLFGIYGLLKNPFLSV) threads the bilayer. The Mitochondrial intermembrane portion of the chain corresponds to 259 to 715 (RFRTTTGLDS…VLEGKKLEVR (457 aa)). The ATP site is built by V283, T325, G326, K327, T328, and L329. H541 contacts Zn(2+). Residue E542 is part of the active site. 2 residues coordinate Zn(2+): H545 and D619.

The protein in the N-terminal section; belongs to the AAA ATPase family. It in the C-terminal section; belongs to the peptidase M41 family. Homohexamer; may also form heterohexamers. Exists in several complexes of 600-1100 kDa. Interacts with AFG1L. Zn(2+) serves as cofactor. Post-translationally, proteolytically processed by mitochondrial processing peptidase (MPP) to generate the mature form. Degraded in an OMA1-dependent manner in response to oxidative stress. Detected in heart and skeletal muscle (at protein level).

The protein resides in the mitochondrion inner membrane. It localises to the mitochondrion. The catalysed reaction is ATP + H2O = ADP + phosphate + H(+). Functionally, ATP-dependent metalloprotease that catalyzes the degradation of folded and unfolded proteins with a suitable degron sequence in the mitochondrial intermembrane region. Plays an important role in regulating mitochondrial morphology and function by cleaving OPA1 at position S2, giving rise to a form of OPA1 that promotes maintenance of normal mitochondrial structure and mitochondrial protein metabolism. Ensures cell proliferation, maintains normal cristae morphology and complex I respiration activity, promotes antiapoptotic activity and protects mitochondria from the accumulation of oxidatively damaged membrane proteins. Required to control the accumulation of nonassembled respiratory chain subunits (NDUFB6, OX4 and ND1). Involved in the mitochondrial adaptation in response to various signals, such as stress or developmental cues, by mediating degradation of mitochondrial proteins to rewire the mitochondrial proteome. Catalyzes degradation of mitochondrial proteins, such as translocases, lipid transfer proteins and metabolic enzymes in response to nutrient starvation in order to limit mitochondrial biogenesis: mechanistically, YME1L is activated by decreased phosphatidylethanolamine levels caused by LPIN1 activity in response to mTORC1 inhibition. Acts as a regulator of adult neural stem cell self-renewal by promoting mitochondrial proteome rewiring, preserving neural stem and progenitor cells self-renewal. Required for normal, constitutive degradation of PRELID1. Catalyzes the degradation of OMA1 in response to membrane depolarization. Mediates degradation of TIMM17A downstream of the integrated stress response (ISR). Catalyzes degradation of MICU1 when MICU1 is not assembled via an interchain disulfide. The sequence is that of ATP-dependent zinc metalloprotease YME1L1 (Yme1l1) from Mus musculus (Mouse).